Here is a 555-residue protein sequence, read N- to C-terminus: Pyrophosphate--fructose 6-phosphate 1-phosphotransferase (555 aa).

Residue Gly-82 coordinates diphosphate. Residue Arg-146 coordinates substrate. Residue Asp-176 participates in Mg(2+) binding. Substrate-binding positions include Thr-204–Asp-206, Lys-243–Tyr-244, Met-251–Arg-253, Glu-312, and Tyr-428–Arg-431. Residue Asp-206 is the Proton acceptor of the active site.

This sequence belongs to the phosphofructokinase type A (PFKA) family. PPi-dependent PFK group II subfamily. Clade 'Long' sub-subfamily. In terms of assembly, homodimer. The cofactor is Mg(2+).

It localises to the cytoplasm. It catalyses the reaction beta-D-fructose 6-phosphate + diphosphate = beta-D-fructose 1,6-bisphosphate + phosphate + H(+). The protein operates within carbohydrate degradation; glycolysis; D-glyceraldehyde 3-phosphate and glycerone phosphate from D-glucose: step 3/4. With respect to regulation, non-allosteric. In terms of biological role, catalyzes the phosphorylation of D-fructose 6-phosphate, the first committing step of glycolysis. Uses inorganic phosphate (PPi) as phosphoryl donor instead of ATP like common ATP-dependent phosphofructokinases (ATP-PFKs), which renders the reaction reversible, and can thus function both in glycolysis and gluconeogenesis. Consistently, PPi-PFK can replace the enzymes of both the forward (ATP-PFK) and reverse (fructose-bisphosphatase (FBPase)) reactions. In Borreliella burgdorferi (strain ATCC 35210 / DSM 4680 / CIP 102532 / B31) (Borrelia burgdorferi), this protein is Pyrophosphate--fructose 6-phosphate 1-phosphotransferase.